The following is a 290-amino-acid chain: Protein EURL homolog (290 aa).

The interval 185 to 206 (SHSQAQKTEETSSGPEGTIQTQ) is disordered. Residues 228-251 (AKLQQRIQEVFEELTHQVQEKDSL) adopt a coiled-coil conformation.

This sequence belongs to the EURL family. As to quaternary structure, interacts with CCDC85B. Expressed in brain (at protein level). Expressed in neural progenitor cells and postmitotic neurons of the embryonic cerebral cortex.

In terms of biological role, plays a role in cortical progenitor cell proliferation and differentiation. Promotes dendritic spine development of post-migratory cortical projection neurons by modulating the beta-catenin signaling pathway. The chain is Protein EURL homolog from Mus musculus (Mouse).